We begin with the raw amino-acid sequence, 333 residues long: tRNA pseudouridine synthase B (333 aa).

Asp46 serves as the catalytic Nucleophile.

The protein belongs to the pseudouridine synthase TruB family. Type 1 subfamily.

It carries out the reaction uridine(55) in tRNA = pseudouridine(55) in tRNA. Its function is as follows. Responsible for synthesis of pseudouridine from uracil-55 in the psi GC loop of transfer RNAs. The sequence is that of tRNA pseudouridine synthase B from Gluconobacter oxydans (strain 621H) (Gluconobacter suboxydans).